The primary structure comprises 395 residues: Succinyl-diaminopimelate desuccinylase (395 aa).

Histidine 74 contacts Zn(2+). The active site involves aspartate 76. Residue aspartate 107 coordinates Zn(2+). The Proton acceptor role is filled by glutamate 141. Positions 142, 170, and 368 each coordinate Zn(2+).

Belongs to the peptidase M20A family. DapE subfamily. As to quaternary structure, homodimer. The cofactor is Zn(2+). It depends on Co(2+) as a cofactor.

The enzyme catalyses N-succinyl-(2S,6S)-2,6-diaminopimelate + H2O = (2S,6S)-2,6-diaminopimelate + succinate. It participates in amino-acid biosynthesis; L-lysine biosynthesis via DAP pathway; LL-2,6-diaminopimelate from (S)-tetrahydrodipicolinate (succinylase route): step 3/3. In terms of biological role, catalyzes the hydrolysis of N-succinyl-L,L-diaminopimelic acid (SDAP), forming succinate and LL-2,6-diaminopimelate (DAP), an intermediate involved in the bacterial biosynthesis of lysine and meso-diaminopimelic acid, an essential component of bacterial cell walls. In Brucella melitensis biotype 2 (strain ATCC 23457), this protein is Succinyl-diaminopimelate desuccinylase.